The following is a 468-amino-acid chain: Cysteine--tRNA ligase (468 aa).

Position 36 (C36) interacts with Zn(2+). The 'HIGH' region signature appears at 38-48; sequence PTVYNRSHIGN. Positions 216, 241, and 245 each coordinate Zn(2+). Positions 274–278 match the 'KMSKS' region motif; the sequence is KMSKS. Position 277 (K277) interacts with ATP.

It belongs to the class-I aminoacyl-tRNA synthetase family. Monomer. Requires Zn(2+) as cofactor.

It is found in the cytoplasm. It catalyses the reaction tRNA(Cys) + L-cysteine + ATP = L-cysteinyl-tRNA(Cys) + AMP + diphosphate. This chain is Cysteine--tRNA ligase, found in Parvibaculum lavamentivorans (strain DS-1 / DSM 13023 / NCIMB 13966).